Consider the following 238-residue polypeptide: CBS domain-containing protein CBSX2, chloroplastic (238 aa).

The N-terminal 71 residues, 1–71 (MGSISLSNSM…ASVNNNNSVP (71 aa)), are a transit peptide targeting the chloroplast. 2 CBS domains span residues 83–145 (MTPR…QNDT) and 177–234 (MTPS…KRET).

Its subcellular location is the plastid. It is found in the chloroplast stroma. In Arabidopsis thaliana (Mouse-ear cress), this protein is CBS domain-containing protein CBSX2, chloroplastic (CBSX2).